Consider the following 318-residue polypeptide: Methionyl-tRNA formyltransferase (318 aa).

112 to 115 is a binding site for (6S)-5,6,7,8-tetrahydrofolate; that stretch reads SILP.

This sequence belongs to the Fmt family.

It catalyses the reaction L-methionyl-tRNA(fMet) + (6R)-10-formyltetrahydrofolate = N-formyl-L-methionyl-tRNA(fMet) + (6S)-5,6,7,8-tetrahydrofolate + H(+). Its function is as follows. Attaches a formyl group to the free amino group of methionyl-tRNA(fMet). The formyl group appears to play a dual role in the initiator identity of N-formylmethionyl-tRNA by promoting its recognition by IF2 and preventing the misappropriation of this tRNA by the elongation apparatus. The polypeptide is Methionyl-tRNA formyltransferase (Haemophilus influenzae (strain PittGG)).